A 272-amino-acid chain; its full sequence is Sugar-phosphatase AraL (272 aa).

This sequence belongs to the HAD-like hydrolase superfamily. It depends on Mg(2+) as a cofactor.

The enzyme catalyses sugar phosphate + H2O = sugar + phosphate.. It catalyses the reaction O-phospho-L-serine + H2O = L-serine + phosphate. The catalysed reaction is O-phospho-D-serine + H2O = D-serine + phosphate. Catalyzes the dephosphorylation of C5 and C6 carbon sugars in vitro. Catalyzes the dephosphorylation of 3'-AMP and phosphoserine in vitro. The chain is Sugar-phosphatase AraL (araL) from Bacillus subtilis (strain 168).